We begin with the raw amino-acid sequence, 339 residues long: Protein RecA (339 aa).

74–81 (GPESSGKT) provides a ligand contact to ATP.

It belongs to the RecA family.

The protein resides in the cytoplasm. Can catalyze the hydrolysis of ATP in the presence of single-stranded DNA, the ATP-dependent uptake of single-stranded DNA by duplex DNA, and the ATP-dependent hybridization of homologous single-stranded DNAs. It interacts with LexA causing its activation and leading to its autocatalytic cleavage. The chain is Protein RecA from Phytoplasma mali (strain AT).